We begin with the raw amino-acid sequence, 142 residues long: Dynein light chain Tctex-type protein 2B (142 aa).

It belongs to the dynein light chain Tctex-type family. In terms of assembly, light chain of the cytoplasmic dynein complex 2, a multisubunit complex composed at least of eleven different proteins. The cytoplasmic dynein 2 complex consists of two catalytic heavy chains (HCs) and a number of non-catalytic subunits presented by intermediate chains (ICs), light intermediate chains (LICs) and light chains (LCs). Among them, a heavy chain (DYNC2H1), two intermediate chains (DYNC2I2 and DYNC2I1), a light intermediate chain (DYNC2LI1), and a light chain (DYNLT2B) are unique to the dynein-2 complex, but a subset of the light chains are also shared by dynein-1 and dynein-2 complexes. Interacts with DYNC2I1. The dimer DYNLT2B-DYNLT1/DYNLT3 interacts with DYNC2I1; this interaction is crucial for retrograde trafficking of ciliary proteins.

The protein resides in the dynein axonemal particle. Acts as one of several non-catalytic accessory components of the cytoplasmic dynein 2 complex (dynein-2 complex), a motor protein complex that drives the movement of cargos along microtubules within cilia and flagella in concert with the intraflagellar transport (IFT) system. Required for proper retrograde ciliary transport. The sequence is that of Dynein light chain Tctex-type protein 2B from Homo sapiens (Human).